A 142-amino-acid polypeptide reads, in one-letter code: Hemoglobin subunit epsilon (142 aa).

Residues His3–Leu142 enclose the Globin domain. Residues Ser14 and Ser51 each carry the phosphoserine modification. Residues His64 and His93 each contribute to the heme b site.

This sequence belongs to the globin family. Heterotetramer of two alpha chains and two epsilon chains in early embryonic hemoglobin Gower-2; two zeta chains and two epsilon chains in early embryonic hemoglobin Gower-1. As to expression, red blood cells.

In terms of biological role, the epsilon chain is a beta-type chain of early mammalian embryonic hemoglobin. In Callithrix geoffroyi (Geoffroy's marmoset), this protein is Hemoglobin subunit epsilon (HBE1).